We begin with the raw amino-acid sequence, 296 residues long: tRNA dimethylallyltransferase (296 aa).

An ATP-binding site is contributed by 11–18; sequence GPTAVGKT. 13–18 contacts substrate; the sequence is TAVGKT. Positions 36–39 are interaction with substrate tRNA; that stretch reads DSQQ.

This sequence belongs to the IPP transferase family. In terms of assembly, monomer. The cofactor is Mg(2+).

It catalyses the reaction adenosine(37) in tRNA + dimethylallyl diphosphate = N(6)-dimethylallyladenosine(37) in tRNA + diphosphate. In terms of biological role, catalyzes the transfer of a dimethylallyl group onto the adenine at position 37 in tRNAs that read codons beginning with uridine, leading to the formation of N6-(dimethylallyl)adenosine (i(6)A). The sequence is that of tRNA dimethylallyltransferase from Streptococcus equi subsp. zooepidemicus (strain H70).